A 315-amino-acid chain; its full sequence is Putative S-adenosyl-L-methionine-dependent methyltransferase MAV_4557 (315 aa).

S-adenosyl-L-methionine is bound by residues aspartate 134 and 163–164 (DL).

The protein belongs to the UPF0677 family.

Functionally, exhibits S-adenosyl-L-methionine-dependent methyltransferase activity. This chain is Putative S-adenosyl-L-methionine-dependent methyltransferase MAV_4557, found in Mycobacterium avium (strain 104).